The primary structure comprises 326 residues: Putative UPF0725 protein At1g28500 (326 aa).

The span at lysine 301–glutamine 320 shows a compositional bias: basic and acidic residues. The interval lysine 301–cysteine 326 is disordered.

Belongs to the UPF0725 (EMB2204) family.

The protein is Putative UPF0725 protein At1g28500 of Arabidopsis thaliana (Mouse-ear cress).